We begin with the raw amino-acid sequence, 198 residues long: Peptidyl-tRNA hydrolase (198 aa).

Tyr16 contacts tRNA. Catalysis depends on His21, which acts as the Proton acceptor. Residues Phe67, Asn69, and Asn115 each contribute to the tRNA site.

Belongs to the PTH family. Monomer.

It localises to the cytoplasm. It catalyses the reaction an N-acyl-L-alpha-aminoacyl-tRNA + H2O = an N-acyl-L-amino acid + a tRNA + H(+). In terms of biological role, hydrolyzes ribosome-free peptidyl-tRNAs (with 1 or more amino acids incorporated), which drop off the ribosome during protein synthesis, or as a result of ribosome stalling. Catalyzes the release of premature peptidyl moieties from peptidyl-tRNA molecules trapped in stalled 50S ribosomal subunits, and thus maintains levels of free tRNAs and 50S ribosomes. This Prochlorococcus marinus (strain MIT 9301) protein is Peptidyl-tRNA hydrolase.